We begin with the raw amino-acid sequence, 267 residues long: MSDILQKILAVKAEEVAAARKHRDLPSVRAEAEANRHDSTLGPRGFAQALRDKIGAGRAAVIAEVKKASPSKGVLRPDFKPAEIAGSYAEHGAACLSVLTDEQFFQGHADYLREARAACALPALRKDFMVDLYQVYEARSWGADCILLIVSALDQGLMAELEACAHELGMDVLVEVHDGHELERALRLSTPLVGVNNRNLRTFETTLDTTLGLLKHMPDDRIVVTESGILKPDDVRKMRAADVNAFLVGEAFMRADDPGTELARLFA.

This sequence belongs to the TrpC family.

The enzyme catalyses 1-(2-carboxyphenylamino)-1-deoxy-D-ribulose 5-phosphate + H(+) = (1S,2R)-1-C-(indol-3-yl)glycerol 3-phosphate + CO2 + H2O. Its pathway is amino-acid biosynthesis; L-tryptophan biosynthesis; L-tryptophan from chorismate: step 4/5. This chain is Indole-3-glycerol phosphate synthase 1 (trpC1), found in Ralstonia nicotianae (strain ATCC BAA-1114 / GMI1000) (Ralstonia solanacearum).